A 150-amino-acid polypeptide reads, in one-letter code: Ankyrin repeat protein C18/B24 (150 aa).

Residues 41 to 73 form an ANK repeat; it reads ENKTLLYYAVDVNNIQFAKRLLEYGASVTTSRS.

The chain is Ankyrin repeat protein C18/B24 from Vaccinia virus (strain Copenhagen) (VACV).